The sequence spans 200 residues: TATA-box-binding protein (200 aa).

2 tandem repeats follow at residues 25–101 and 115–192.

This sequence belongs to the TBP family. As to quaternary structure, belongs to the TFIID complex together with the TBP-associated factors (TAFs). Binds DNA as monomer.

The protein resides in the nucleus. In terms of biological role, general transcription factor that functions at the core of the DNA-binding multiprotein factor TFIID. Binding of TFIID to the TATA box is the initial transcriptional step of the pre-initiation complex (PIC), playing a role in the activation of eukaryotic genes transcribed by RNA polymerase II. This chain is TATA-box-binding protein, found in Nicotiana tabacum (Common tobacco).